The primary structure comprises 408 residues: Peptidase T-like protein RB0614 (408 aa).

Residue histidine 80 coordinates Zn(2+). Aspartate 82 is a catalytic residue. Aspartate 142 serves as a coordination point for Zn(2+). Glutamate 174 functions as the Proton acceptor in the catalytic mechanism. 3 residues coordinate Zn(2+): glutamate 175, aspartate 198, and histidine 380.

It belongs to the peptidase M20B family. Requires Zn(2+) as cofactor.

The sequence is that of Peptidase T-like protein RB0614 from Rhizobium meliloti (strain 1021) (Ensifer meliloti).